The sequence spans 495 residues: Angiopoietin-2 (495 aa).

A signal peptide spans 1–18 (MWQIVFFTLSCDLVRAAA). 6 N-linked (GlcNAc...) asparagine glycosylation sites follow: Asn-88, Asn-118, Asn-132, Asn-150, Asn-239, and Asn-303. The stretch at 165–247 (STNKLEKQIL…VNNSVLQKQQ (83 aa)) forms a coiled coil. The Fibrinogen C-terminal domain maps to 274-494 (KEEQIIYRDC…GTTMMIRPAD (221 aa)). Cysteines 283 and 312 form a disulfide. The Ca(2+) site is built by Asp-428, Asp-430, Cys-432, and Cys-434. Disulfide bonds link Cys-432/Cys-434 and Cys-436/Cys-449.

In terms of assembly, interacts with TEK/TIE2, competing for the same binding site as ANGPT1. Interacts with ITGA5. Interacts with SVEP1/polydom. Interacts with THBD; this interaction significantly inhibits the generation of activated PC and TAFIa/CPB2 by the thrombin/thrombomodulin complex.

The protein resides in the secreted. Functionally, binds to TEK/TIE2, competing for the ANGPT1 binding site, and modulating ANGPT1 signaling. Can induce tyrosine phosphorylation of TEK/TIE2 in the absence of ANGPT1. In the absence of angiogenic inducers, such as VEGF, ANGPT2-mediated loosening of cell-matrix contacts may induce endothelial cell apoptosis with consequent vascular regression. In concert with VEGF, it may facilitate endothelial cell migration and proliferation, thus serving as a permissive angiogenic signal. Involved in the regulation of lymphangiogenesis. This chain is Angiopoietin-2 (ANGPT2), found in Canis lupus familiaris (Dog).